Here is a 368-residue protein sequence, read N- to C-terminus: MQPGSSRCEEETPSLLWGLDPVFLAFAKLYIRDILDMKESRQVPGVFLYNGHPIKQVDVLGTVVGVRERDAFYSYGVDDSTGVINCICWKKLNTESVSAAPSAARELSLTSQLKKLQETIERRTKIEIGDTIRVRGSIRTYREEREIHATAYYKVDDPVWNIQIARMLELPTIYRKIYDQPFRSSALEKEEALSNPGALDLPSLTSLLSEKAKEFLMENRVQSFYQQELEMVESLLCLANQPVIHSACSDQVNFKKDTTSKAIHSIFKNAIQLLREKGLVFQKDDGFDNLYYVTREDKDLHRKIHQIIQQDCQKPNHMEKGCHFLHILACARLSIRPGLSEAVLQQVLELLEDQSDIVSTMEHYYTAF.

An interaction with CTC1 region spans residues 1–185 (MQPGSSRCEE…KIYDQPFRSS (185 aa)). Residues 57–155 (VDVLGTVVGV…EIHATAYYKV (99 aa)) constitute a DNA-binding region (OB). 2 winged helix-turn-helix (wHTH) regions span residues 191 to 295 (EALS…YVTR) and 296 to 368 (EDKD…YTAF).

The protein belongs to the STN1 family. Component of the CST complex, composed of TEN1/C17orf106, CTC1/C17orf68 and STN1; in the complex interacts directly with TEN1 and CTC1. Interacts with ACD/TPP1, POT1 and POLA1.

It is found in the nucleus. The protein resides in the chromosome. Its subcellular location is the telomere. Component of the CST complex proposed to act as a specialized replication factor promoting DNA replication under conditions of replication stress or natural replication barriers such as the telomere duplex. The CST complex binds single-stranded DNA with high affinity in a sequence-independent manner, while isolated subunits bind DNA with low affinity by themselves. Initially the CST complex has been proposed to protect telomeres from DNA degradation. However, the CST complex has been shown to be involved in several aspects of telomere replication. The CST complex inhibits telomerase and is involved in telomere length homeostasis; it is proposed to bind to newly telomerase-synthesized 3' overhangs and to terminate telomerase action implicating the association with the ACD:POT1 complex thus interfering with its telomerase stimulation activity. The CST complex is also proposed to be involved in fill-in synthesis of the telomeric C-strand probably implicating recruitment and activation of DNA polymerase alpha. The CST complex facilitates recovery from many forms of exogenous DNA damage; seems to be involved in the re-initiation of DNA replication at repaired forks and/or dormant origins. Required for efficicient replication of the duplex region of the telomere. Promotes efficient replication of lagging-strand telomeres. Promotes general replication start following replication-fork stalling implicating new origin firing. May be in involved in C-strand fill-in during late S/G2 phase independent of its role in telomere duplex replication. The polypeptide is CST complex subunit STN1 (Macaca fascicularis (Crab-eating macaque)).